Reading from the N-terminus, the 78-residue chain is Large ribosomal subunit protein bL28 (78 aa).

The protein belongs to the bacterial ribosomal protein bL28 family.

This Francisella tularensis subsp. holarctica (strain FTNF002-00 / FTA) protein is Large ribosomal subunit protein bL28.